A 216-amino-acid polypeptide reads, in one-letter code: ADP-ribosylation factor D (216 aa).

Over residues 188-204 (SKFSFSNKSKQQKSNSQ) the composition is skewed to low complexity. The segment at 188-216 (SKFSFSNKSKQQKSNSQPNTPRKNIQMMT) is disordered. Residues 205–216 (PNTPRKNIQMMT) show a composition bias toward polar residues.

It belongs to the small GTPase superfamily. Arf family.

The protein localises to the golgi apparatus. GTP-binding protein involved in protein trafficking; may modulate vesicle budding and uncoating within the Golgi apparatus. The protein is ADP-ribosylation factor D (arrD) of Dictyostelium discoideum (Social amoeba).